The chain runs to 1341 residues: uncharacterized protein (1341 aa).

Positions 41 to 68 (CLLCRRRKQRCDHKLPSCTACLKAGIKC) form a DNA-binding region, zn(2)-C6 fungal-type. 5 stretches are compositionally biased toward low complexity: residues 72–93 (SKYS…AGTV), 779–791 (SNSA…SNSN), 864–906 (SNSS…NDNN), 920–967 (NHNN…GNNS), and 1036–1050 (SPSK…SSHS). 4 disordered regions span residues 72-100 (SKYS…PHPV), 770-804 (ISSG…MPPA), 864-971 (SNSS…QYVR), and 1031-1116 (TMTN…NSNP). Over residues 1057–1076 (MTQSPTPYPQTSNMLPQQHV) the composition is skewed to polar residues. Over residues 1078 to 1090 (RPLPQQQREQPQQ) the composition is skewed to low complexity. Positions 1091-1116 (HITSPQRFSESNFTNQLNNGMINSNP) are enriched in polar residues. A Phosphoserine modification is found at Ser-1143. The span at 1220–1230 (SQEPSSLSMDK) shows a compositional bias: polar residues. The interval 1220 to 1240 (SQEPSSLSMDKQQQQHQQQNM) is disordered.

It localises to the nucleus. This is an uncharacterized protein from Saccharomyces cerevisiae (strain ATCC 204508 / S288c) (Baker's yeast).